Consider the following 467-residue polypeptide: UDP-N-acetylmuramate--L-alanine ligase (467 aa).

An ATP-binding site is contributed by 121-127 (GSHGKTT).

It belongs to the MurCDEF family.

It localises to the cytoplasm. The catalysed reaction is UDP-N-acetyl-alpha-D-muramate + L-alanine + ATP = UDP-N-acetyl-alpha-D-muramoyl-L-alanine + ADP + phosphate + H(+). It functions in the pathway cell wall biogenesis; peptidoglycan biosynthesis. Cell wall formation. The sequence is that of UDP-N-acetylmuramate--L-alanine ligase from Parasynechococcus marenigrum (strain WH8102).